The chain runs to 483 residues: Phosphoenolpyruvate carboxylase (483 aa).

Residues Met-1–Phe-20 form a disordered region.

This sequence belongs to the PEPCase type 2 family. In terms of assembly, homotetramer. The cofactor is Mg(2+).

The catalysed reaction is oxaloacetate + phosphate = phosphoenolpyruvate + hydrogencarbonate. Inhibited by NaCl, KCl, ATP, ADP, GTP and aspartate. Unlike E.coli, not regulated by acetyl-CoA. Functionally, catalyzes the irreversible beta-carboxylation of phosphoenolpyruvate (PEP) to form oxaloacetate (OAA), a four-carbon dicarboxylic acid source for the tricarboxylic acid cycle. The chain is Phosphoenolpyruvate carboxylase (ppcA) from Methanothermobacter thermautotrophicus (strain ATCC 29096 / DSM 1053 / JCM 10044 / NBRC 100330 / Delta H) (Methanobacterium thermoautotrophicum).